Reading from the N-terminus, the 182-residue chain is UPF0397 protein SPH_0594 (182 aa).

Helical transmembrane passes span 10–30, 46–66, 73–93, 109–129, and 148–168; these read VVAVGIGAALFVVIGMINIPT, LLSIIFGPIIGLLVGVIGHAI, YGLWWTWIIASGLFGLVVGLF, ILIFNLIQLLANALVWGVLAP, and IVAGIANGVSVAIAGTLLLLA.

The protein belongs to the UPF0397 family.

The protein localises to the cell membrane. In Streptococcus pneumoniae (strain Hungary19A-6), this protein is UPF0397 protein SPH_0594.